Here is a 197-residue protein sequence, read N- to C-terminus: dITP/XTP pyrophosphatase (197 aa).

8–13 contacts substrate; it reads TGNAGK. The Mg(2+) site is built by Glu40 and Asp69. Asp69 functions as the Proton acceptor in the catalytic mechanism. Residues Ser70, 154–157, Lys177, and 182–183 contribute to the substrate site; these read FGYD and HR.

It belongs to the HAM1 NTPase family. As to quaternary structure, homodimer. Requires Mg(2+) as cofactor.

It catalyses the reaction XTP + H2O = XMP + diphosphate + H(+). It carries out the reaction dITP + H2O = dIMP + diphosphate + H(+). The enzyme catalyses ITP + H2O = IMP + diphosphate + H(+). Pyrophosphatase that catalyzes the hydrolysis of nucleoside triphosphates to their monophosphate derivatives, with a high preference for the non-canonical purine nucleotides XTP (xanthosine triphosphate), dITP (deoxyinosine triphosphate) and ITP. Seems to function as a house-cleaning enzyme that removes non-canonical purine nucleotides from the nucleotide pool, thus preventing their incorporation into DNA/RNA and avoiding chromosomal lesions. The polypeptide is dITP/XTP pyrophosphatase (rdgB) (Salmonella paratyphi A (strain ATCC 9150 / SARB42)).